A 148-amino-acid chain; its full sequence is Angiogenin-1 (148 aa).

The N-terminal stretch at 1–23 (MVMVLSPLLLVFILGLGLTPVAP) is a signal peptide. Residue His-37 is the Proton acceptor of the active site. Arg-45 lines the tRNA pocket. Intrachain disulfides connect Cys-50–Cys-105, Cys-63–Cys-116, and Cys-81–Cys-131. The Nucleolar localization signal motif lies at 55 to 59 (KNRRL). TRNA-binding residues include Cys-105 and Ile-127. Catalysis depends on His-138, which acts as the Proton donor.

The protein belongs to the pancreatic ribonuclease family. In terms of assembly, homodimer. Interacts with RNH1; inhibiting ANG ribonuclease activity. As to expression, serum and milk.

It is found in the secreted. The protein resides in the nucleus. It localises to the nucleolus. Its subcellular location is the cytoplasm. The protein localises to the stress granule. In terms of biological role, secreted ribonuclease that can either promote or restrict cell proliferation of target cells, depending on the context. Endocytosed in target cells via its receptor PLXNB2 and translocates to the cytoplasm or nucleus. Under stress conditions, localizes to the cytoplasm and promotes the assembly of stress granules (SGs): specifically cleaves a subset of tRNAs within anticodon loops to produce tRNA-derived stress-induced fragments (tiRNAs), resulting in translation repression and inhibition of cell proliferation. tiRNas also prevent formation of apoptosome, thereby promoting cell survival. Preferentially cleaves RNAs between a pyrimidine and an adenosine residue, suggesting that it cleaves the anticodon loop of tRNA(Ala) (32-UUAGCAU-38) after positions 33 and 36. Cleaves a subset of tRNAs, including tRNA(Ala), tRNA(Glu), tRNA(Gly), tRNA(Lys), tRNA(Val), tRNA(His), tRNA(Asp) and tRNA(Sec). Under growth conditions and in differentiated cells, translocates to the nucleus and stimulates ribosomal RNA (rRNA) transcription, including that containing the initiation site sequences of 45S rRNA, thereby promoting cell growth and proliferation. Angiogenin induces vascularization of normal and malignant tissues via its ability to promote rRNA transcription. This is Angiogenin-1 (ANG1) from Bos taurus (Bovine).